Here is a 118-residue protein sequence, read N- to C-terminus: Peptidyl-prolyl cis-trans isomerase Pin1 (118 aa).

Disordered regions lie at residues 1 to 37 (MSSE…ATTR) and 61 to 84 (LASR…GRGQ). One can recognise a PpiC domain in the interval 3–118 (SEKVRASHIL…SGVHIIKRTG (116 aa)). A compositionally biased stretch (basic residues) spans 12–22 (LIKHQGSRRKS).

Belongs to the PpiC/parvulin rotamase family. In terms of processing, the N-terminus is blocked. As to expression, expressed in roots, stems, leaves, flowers and seedlings.

Its subcellular location is the cytoplasm. It localises to the nucleus. It carries out the reaction [protein]-peptidylproline (omega=180) = [protein]-peptidylproline (omega=0). Inhibited in vitro by juglone. Its function is as follows. Prolyl cis/trans isomerase with specificity for phospho-Ser-Pro bonds. The sequence is that of Peptidyl-prolyl cis-trans isomerase Pin1 (PARV12.8) from Digitalis lanata (Grecian foxglove).